Consider the following 499-residue polypeptide: tRNA (guanine(37)-N(1))-methyltransferase (499 aa).

A mitochondrion-targeting transit peptide spans 1–44 (MKIALPVFQKFNRLISSCKMSGVFPYNPPVNRQMRELDRSFFIT). S-adenosyl-L-methionine-binding positions include His268, 307 to 308 (DL), 335 to 336 (DG), and Asn399.

It belongs to the class I-like SAM-binding methyltransferase superfamily. TRM5/TYW2 family. Monomer.

The protein resides in the mitochondrion matrix. It localises to the nucleus. Its subcellular location is the cytoplasm. It carries out the reaction guanosine(37) in tRNA + S-adenosyl-L-methionine = N(1)-methylguanosine(37) in tRNA + S-adenosyl-L-homocysteine + H(+). Specifically methylates the N1 position of guanosine-37 in various cytoplasmic and mitochondrial tRNAs. Methylation is not dependent on the nature of the nucleoside 5' of the target nucleoside. This is the first step in the biosynthesis of wybutosine (yW), a modified base adjacent to the anticodon of tRNAs and required for accurate decoding. Postspliced cytoplasmic tRNAs are imported into the nucleus, where this first step seems to take place, after which they are reexported to the cytoplasm, where the yW sythesis is completed by cytoplasmic enzymes. The chain is tRNA (guanine(37)-N(1))-methyltransferase from Saccharomyces cerevisiae (strain ATCC 204508 / S288c) (Baker's yeast).